A 258-amino-acid polypeptide reads, in one-letter code: Myogenic factor 5 (258 aa).

The segment at 21 to 50 (LSSPEGEFPEDFEPRELPPFGAPAPTEPAC) is disordered. The bHLH domain maps to 85 to 136 (DRRKAATMRERRRLKKVNQAFETLKRCTTANPNQRLPKVEILRNAIRYIESL). The tract at residues 220–258 (AEEPGLPLRHAGSLSPGASIDSGPGTPGSPPPRRTYQAL) is disordered.

In terms of assembly, efficient DNA binding requires dimerization with another bHLH protein.

Its subcellular location is the nucleus. In terms of biological role, acts as a transcriptional activator that promotes transcription of muscle-specific target genes and plays a role in muscle differentiation. Induces fibroblasts to differentiate into myoblasts. Probable sequence specific DNA-binding protein. The chain is Myogenic factor 5 (MYF5) from Gallus gallus (Chicken).